A 112-amino-acid chain; its full sequence is Photosystem II reaction center Psb28 protein (112 aa).

It belongs to the Psb28 family. In terms of assembly, part of the photosystem II complex.

The protein localises to the cellular thylakoid membrane. This Synechocystis sp. (strain ATCC 27184 / PCC 6803 / Kazusa) protein is Photosystem II reaction center Psb28 protein.